The chain runs to 250 residues: Biosynthetic peptidoglycan transglycosylase (250 aa).

A helical membrane pass occupies residues alanine 15–valine 35.

Belongs to the glycosyltransferase 51 family.

It localises to the cell inner membrane. The catalysed reaction is [GlcNAc-(1-&gt;4)-Mur2Ac(oyl-L-Ala-gamma-D-Glu-L-Lys-D-Ala-D-Ala)](n)-di-trans,octa-cis-undecaprenyl diphosphate + beta-D-GlcNAc-(1-&gt;4)-Mur2Ac(oyl-L-Ala-gamma-D-Glu-L-Lys-D-Ala-D-Ala)-di-trans,octa-cis-undecaprenyl diphosphate = [GlcNAc-(1-&gt;4)-Mur2Ac(oyl-L-Ala-gamma-D-Glu-L-Lys-D-Ala-D-Ala)](n+1)-di-trans,octa-cis-undecaprenyl diphosphate + di-trans,octa-cis-undecaprenyl diphosphate + H(+). It participates in cell wall biogenesis; peptidoglycan biosynthesis. Its function is as follows. Peptidoglycan polymerase that catalyzes glycan chain elongation from lipid-linked precursors. This is Biosynthetic peptidoglycan transglycosylase from Bdellovibrio bacteriovorus (strain ATCC 15356 / DSM 50701 / NCIMB 9529 / HD100).